The sequence spans 263 residues: Small ribosomal subunit protein eS4, Y isoform 1 (263 aa).

Positions 42–104 (LPLIIFLRNR…TGEHFRLVYD (63 aa)) constitute an S4 RNA-binding domain.

This sequence belongs to the eukaryotic ribosomal protein eS4 family.

The protein is Small ribosomal subunit protein eS4, Y isoform 1 (RPS4Y1) of Macaca fuscata fuscata (Japanese macaque).